A 201-amino-acid chain; its full sequence is uncharacterized protein (201 aa).

This sequence belongs to the methyltransferase superfamily.

This is an uncharacterized protein from Bacillus subtilis (strain 168).